The sequence spans 79 residues: Large ribosomal subunit protein uL22 (79 aa).

This sequence belongs to the universal ribosomal protein uL22 family. In terms of assembly, part of the 50S ribosomal subunit.

In terms of biological role, this protein binds specifically to 23S rRNA; its binding is stimulated by other ribosomal proteins, e.g. L4, L17, and L20. It is important during the early stages of 50S assembly. It makes multiple contacts with different domains of the 23S rRNA in the assembled 50S subunit and ribosome. Its function is as follows. The globular domain of the protein is located near the polypeptide exit tunnel on the outside of the subunit, while an extended beta-hairpin is found that lines the wall of the exit tunnel in the center of the 70S ribosome. This chain is Large ribosomal subunit protein uL22 (rplV), found in Clover proliferation phytoplasma.